We begin with the raw amino-acid sequence, 312 residues long: Regulation of nuclear pre-mRNA domain-containing protein 1A (312 aa).

The residue at position 2 (Ser2) is an N-acetylserine. One can recognise a CID domain in the interval 2-133 (SAFSEAALEK…QLKHALYGDK (132 aa)). 3 positions are modified to phosphoserine: Ser153, Ser156, and Ser285. Positions 244–286 (LADFLRCQKEALAEKEHKLEEYKRKLARVSLVRKELRARIQSL) form a coiled coil.

It belongs to the UPF0400 (RTT103) family. In terms of assembly, may form a heterodimer with RPRD1B. Associates with the RNA polymerase II subunit POLR2A (via CTD phosphorylated at 'Ser-2' and 'Ser-7' of the heptad repeats).

It localises to the nucleus. Interacts with phosphorylated C-terminal heptapeptide repeat domain (CTD) of the largest RNA polymerase II subunit POLR2A, and participates in dephosphorylation of the CTD by RPAP2. May act as a negative regulator of cyclin-D1 (CCND1) and cyclin-E (CCNE1) in the cell cycle. This is Regulation of nuclear pre-mRNA domain-containing protein 1A (Rprd1a) from Mus musculus (Mouse).